The chain runs to 184 residues: ATP synthase subunit b, chloroplastic (184 aa).

A helical transmembrane segment spans residues 27 to 49 (FATNPINLSVVLGVLIFFGKGVL).

This sequence belongs to the ATPase B chain family. F-type ATPases have 2 components, F(1) - the catalytic core - and F(0) - the membrane proton channel. F(1) has five subunits: alpha(3), beta(3), gamma(1), delta(1), epsilon(1). F(0) has four main subunits: a(1), b(1), b'(1) and c(10-14). The alpha and beta chains form an alternating ring which encloses part of the gamma chain. F(1) is attached to F(0) by a central stalk formed by the gamma and epsilon chains, while a peripheral stalk is formed by the delta, b and b' chains.

It localises to the plastid. Its subcellular location is the chloroplast thylakoid membrane. F(1)F(0) ATP synthase produces ATP from ADP in the presence of a proton or sodium gradient. F-type ATPases consist of two structural domains, F(1) containing the extramembraneous catalytic core and F(0) containing the membrane proton channel, linked together by a central stalk and a peripheral stalk. During catalysis, ATP synthesis in the catalytic domain of F(1) is coupled via a rotary mechanism of the central stalk subunits to proton translocation. Functionally, component of the F(0) channel, it forms part of the peripheral stalk, linking F(1) to F(0). This is ATP synthase subunit b, chloroplastic from Amborella trichopoda.